A 206-amino-acid chain; its full sequence is Ribosomal RNA small subunit methyltransferase G (206 aa).

Residues G74, L79, 125–126, and R140 each bind S-adenosyl-L-methionine; that span reads VE.

The protein belongs to the methyltransferase superfamily. RNA methyltransferase RsmG family.

The protein resides in the cytoplasm. The catalysed reaction is guanosine(527) in 16S rRNA + S-adenosyl-L-methionine = N(7)-methylguanosine(527) in 16S rRNA + S-adenosyl-L-homocysteine. Its function is as follows. Specifically methylates the N7 position of guanine in position 527 of 16S rRNA. This chain is Ribosomal RNA small subunit methyltransferase G, found in Shewanella sp. (strain ANA-3).